A 368-amino-acid polypeptide reads, in one-letter code: Molybdenum import ATP-binding protein ModC (368 aa).

Positions 1-230 (MTIKIQFKQT…HAMRPWQSFS (230 aa)) constitute an ABC transporter domain. Position 32-39 (32-39 (GRSGAGKT)) interacts with ATP. Positions 291-362 (ATSIRNVLPA…VKGVSVTQRD (72 aa)) constitute a Mop domain.

The protein belongs to the ABC transporter superfamily. Molybdate importer (TC 3.A.1.8) family. In terms of assembly, the complex is composed of two ATP-binding proteins (ModC), two transmembrane proteins (ModB) and a solute-binding protein (ModA).

It is found in the cell inner membrane. It carries out the reaction molybdate(out) + ATP + H2O = molybdate(in) + ADP + phosphate + H(+). Functionally, part of the ABC transporter complex ModABC involved in molybdenum import. Responsible for energy coupling to the transport system. This Vibrio parahaemolyticus serotype O3:K6 (strain RIMD 2210633) protein is Molybdenum import ATP-binding protein ModC.